Consider the following 303-residue polypeptide: MKKIKCALIGPGNIGTDLLAKLQRSPVLEPVWMVGIDPGSDGLKRARDAGLKTTAEGVDGLLPHVKADGVQIAFDATSAYVHAENSRKLNALGVMMIDLTPAAIGPFCVPPVNLKQHLGRREMNVNMVTCGGQATIPMVAAVSQVQAVAYGEIVATVSSRSVGPGTRKNIDEFTRTTAGAVEKVGGAKKGKAIIIINPAEPPLIMRDTVHCLTVDEPDRDRITASIHQMIREVQKYVPGYKLVNGPVFDGKRVSVFMEVEGLGDYLPKYAGNLDIMTAAAARTAEMFAEELIAGTLKLEAVPA.

C130 (acyl-thioester intermediate) is an active-site residue. NAD(+) is bound by residues 161–169 (SVGPGTRKN) and N272.

The protein belongs to the acetaldehyde dehydrogenase family.

It carries out the reaction acetaldehyde + NAD(+) + CoA = acetyl-CoA + NADH + H(+). The chain is Acetaldehyde dehydrogenase 1 from Methylibium petroleiphilum (strain ATCC BAA-1232 / LMG 22953 / PM1).